The sequence spans 332 residues: Ethylene-responsive transcription factor ERF119 (332 aa).

A disordered region spans residues 1–33; the sequence is MAERKKRSSIQTNKPNKKPMKKKPFQLNHLPGL. Basic residues predominate over residues 15–24; that stretch reads PNKKPMKKKP. Residues 130-187 constitute a DNA-binding region (AP2/ERF); sequence KPVGVRQRKWGKWAAEIRHPITKVRTWLGTYETLEQAADAYATKKLEFDALAAATSAA.

This sequence belongs to the AP2/ERF transcription factor family. ERF subfamily.

The protein localises to the nucleus. Its function is as follows. Probably acts as a transcriptional activator. Binds to the GCC-box pathogenesis-related promoter element. May be involved in the regulation of gene expression by stress factors and by components of stress signal transduction pathways. The polypeptide is Ethylene-responsive transcription factor ERF119 (ERF119) (Arabidopsis thaliana (Mouse-ear cress)).